The sequence spans 369 residues: Phenylalanine--tRNA ligase alpha subunit (369 aa).

Glutamate 269 is a Mg(2+) binding site.

The protein belongs to the class-II aminoacyl-tRNA synthetase family. Phe-tRNA synthetase alpha subunit type 1 subfamily. In terms of assembly, tetramer of two alpha and two beta subunits. It depends on Mg(2+) as a cofactor.

The protein resides in the cytoplasm. It catalyses the reaction tRNA(Phe) + L-phenylalanine + ATP = L-phenylalanyl-tRNA(Phe) + AMP + diphosphate + H(+). In Brucella abortus (strain 2308), this protein is Phenylalanine--tRNA ligase alpha subunit.